The following is a 92-amino-acid chain: Small ribosomal subunit protein uS19c (92 aa).

It belongs to the universal ribosomal protein uS19 family.

Its subcellular location is the plastid. The protein localises to the chloroplast. Functionally, protein S19 forms a complex with S13 that binds strongly to the 16S ribosomal RNA. The chain is Small ribosomal subunit protein uS19c from Gossypium barbadense (Sea Island cotton).